A 421-amino-acid chain; its full sequence is POU domain, class 4, transcription factor 1 (421 aa).

Residues 57 to 66 (RAEALAAVDI) carry the POU-IV box motif. Disordered stretches follow at residues 94–117 (STVP…GDLL) and 133–200 (GAGA…GLGH). Positions 99-108 (AHHHHHHHHH) are enriched in basic residues. Gly residues predominate over residues 133–186 (GAGAAGGGGGAHDGPGGGGGPGGGGGPGGGGPGGGGGGGGPGGGGGGPGGGLLG). Residues 262–339 (DSDTDPRELE…ILQAWLEEAE (78 aa)) enclose the POU-specific domain. A DNA-binding region (homeobox) is located at residues 357 to 416 (KKRKRTSIAAPEKRSLEAYFAVQPRPSSEKIAAIAEKLDLKKNVVRVWFCNQRQKQKRMK).

It belongs to the POU transcription factor family. Class-4 subfamily. Interacts (via N-terminus) with RIT2; the interaction controls POU4F1 transactivation activity on some neuronal target genes. Isoform 1 interacts with POU4F2 isoform 2; this interaction inhibits both POU4F1 DNA-binding and transcriptional activities. Isoform 1 interacts (C-terminus) with ESR1 (via DNA-binding domain); this interaction decreases the estrogen receptor ESR1 transcriptional activity in a DNA- and ligand 17-beta-estradiol-independent manner. As to expression, expressed in mature osteoclasts (at protein level). Brain, peripheral sensory nervous system and retina. In the adult nervous system, predominates in the medial habenula, superficial gray of the superior colliculus, red nucleus, mesencephalic nucleus of the trigeminal ganglion, nucleus ambiguus, inferior olivary nucleus, and peripheral sensory ganglia.

It is found in the nucleus. Its subcellular location is the cytoplasm. Multifunctional transcription factor with different regions mediating its different effects. Acts by binding (via its C-terminal domain) to sequences related to the consensus octamer motif 5'-ATGCAAAT-3' in the regulatory regions of its target genes. Regulates the expression of specific genes involved in differentiation and survival within a subset of neuronal lineages. It has been shown that activation of some of these genes requires its N-terminal domain, maybe through a neuronal-specific cofactor. Activates BCL2 expression and protects neuronal cells from apoptosis (via the N-terminal domain). Induces neuronal process outgrowth and the coordinate expression of genes encoding synaptic proteins. Exerts its major developmental effects in somatosensory neurons and in brainstem nuclei involved in motor control. Stimulates the binding affinity of the nuclear estrogene receptor ESR1 to DNA estrogen response element (ERE), and hence modulates ESR1-induced transcriptional activity. May positively regulate POU4F2 and POU4F3. Regulates dorsal root ganglion sensory neuron specification and axonal projection into the spinal cord. Plays a role in TNFSF11-mediated terminal osteoclast differentiation. Negatively regulates its own expression interacting directly with a highly conserved autoregulatory domain surrounding the transcription initiation site. In terms of biological role, able to act as transcription factor, cannot regulate the expression of the same subset of genes than isoform 1. Does not have antiapoptotic effect on neuronal cells. The chain is POU domain, class 4, transcription factor 1 (Pou4f1) from Mus musculus (Mouse).